A 404-amino-acid chain; its full sequence is Cysteine desulfurase IscS (404 aa).

Pyridoxal 5'-phosphate-binding positions include 75 to 76, asparagine 155, glutamine 183, and 203 to 205; these read AT and SGH. Lysine 206 bears the N6-(pyridoxal phosphate)lysine mark. Threonine 243 is a binding site for pyridoxal 5'-phosphate. Cysteine 328 serves as the catalytic Cysteine persulfide intermediate. Residue cysteine 328 coordinates [2Fe-2S] cluster.

This sequence belongs to the class-V pyridoxal-phosphate-dependent aminotransferase family. NifS/IscS subfamily. Homodimer. Forms a heterotetramer with IscU, interacts with other sulfur acceptors. It depends on pyridoxal 5'-phosphate as a cofactor.

The protein resides in the cytoplasm. The enzyme catalyses (sulfur carrier)-H + L-cysteine = (sulfur carrier)-SH + L-alanine. It functions in the pathway cofactor biosynthesis; iron-sulfur cluster biosynthesis. Functionally, master enzyme that delivers sulfur to a number of partners involved in Fe-S cluster assembly, tRNA modification or cofactor biosynthesis. Catalyzes the removal of elemental sulfur atoms from cysteine to produce alanine. Functions as a sulfur delivery protein for Fe-S cluster synthesis onto IscU, an Fe-S scaffold assembly protein, as well as other S acceptor proteins. The chain is Cysteine desulfurase IscS from Shewanella baltica (strain OS155 / ATCC BAA-1091).